The chain runs to 298 residues: MAVSARDYWDLTKPKVVALIVFTALVGMFLAIPDMPTWLQVRTGALGFLGIWLAASAAAAINQLLDAKIDAQMARTSWRPLVVGKVRPWQVLVFAGVLIVISMTILVVWVNVITAVLTFASLIGYAVIYTVYLKRATSQNIVIGGLAGATPPMLGWAAVTGLPTSADWINASLLVLIIFIWTPPHFWALAIFRRADYAKAAIPMLPVTHGVPHTRKQILVYTVLLAIVTLAPVAVGMSGMFYLGGAAVLNAVFLWYAWRMLNPPDELFSMKMFGYSIVYLMALFAFLMVDHLLLPWVR.

9 helical membrane passes run 16-36 (VVAL…PDMP), 45-65 (ALGF…NQLL), 93-113 (VFAG…VNVI), 114-134 (TAVL…VYLK), 141-161 (IVIG…AVTG), 172-192 (SLLV…LAIF), 218-238 (ILVY…VGMS), 241-261 (FYLG…WRML), and 277-297 (IVYL…LPWV).

It belongs to the UbiA prenyltransferase family. Protoheme IX farnesyltransferase subfamily.

The protein resides in the cell inner membrane. The catalysed reaction is heme b + (2E,6E)-farnesyl diphosphate + H2O = Fe(II)-heme o + diphosphate. Its pathway is porphyrin-containing compound metabolism; heme O biosynthesis; heme O from protoheme: step 1/1. Converts heme B (protoheme IX) to heme O by substitution of the vinyl group on carbon 2 of heme B porphyrin ring with a hydroxyethyl farnesyl side group. The protein is Protoheme IX farnesyltransferase of Xanthomonas axonopodis pv. citri (strain 306).